The primary structure comprises 303 residues: Pyridoxal 5'-phosphate synthase subunit PdxS (303 aa).

Residue Asp33 coordinates D-ribose 5-phosphate. The Schiff-base intermediate with D-ribose 5-phosphate role is filled by Lys90. Gly162 lines the D-ribose 5-phosphate pocket. Residue Arg174 participates in D-glyceraldehyde 3-phosphate binding. D-ribose 5-phosphate contacts are provided by residues Gly223 and 244–245 (GS).

Belongs to the PdxS/SNZ family. In the presence of PdxT, forms a dodecamer of heterodimers.

It catalyses the reaction aldehydo-D-ribose 5-phosphate + D-glyceraldehyde 3-phosphate + L-glutamine = pyridoxal 5'-phosphate + L-glutamate + phosphate + 3 H2O + H(+). It participates in cofactor biosynthesis; pyridoxal 5'-phosphate biosynthesis. In terms of biological role, catalyzes the formation of pyridoxal 5'-phosphate from ribose 5-phosphate (RBP), glyceraldehyde 3-phosphate (G3P) and ammonia. The ammonia is provided by the PdxT subunit. Can also use ribulose 5-phosphate and dihydroxyacetone phosphate as substrates, resulting from enzyme-catalyzed isomerization of RBP and G3P, respectively. In Streptomyces coelicolor (strain ATCC BAA-471 / A3(2) / M145), this protein is Pyridoxal 5'-phosphate synthase subunit PdxS.